We begin with the raw amino-acid sequence, 34 residues long: uncharacterized protein (34 aa).

A helical membrane pass occupies residues 10-30; that stretch reads LIITSSFFAIAVVLVLSVLLI.

Its subcellular location is the membrane. This is an uncharacterized protein from Shigella flexneri.